A 178-amino-acid polypeptide reads, in one-letter code: Large ribosomal subunit protein uL5 (178 aa).

Belongs to the universal ribosomal protein uL5 family. In terms of assembly, part of the 50S ribosomal subunit; part of the 5S rRNA/L5/L18/L25 subcomplex. Contacts the 5S rRNA and the P site tRNA. Forms a bridge to the 30S subunit in the 70S ribosome.

This is one of the proteins that bind and probably mediate the attachment of the 5S RNA into the large ribosomal subunit, where it forms part of the central protuberance. In the 70S ribosome it contacts protein S13 of the 30S subunit (bridge B1b), connecting the 2 subunits; this bridge is implicated in subunit movement. Contacts the P site tRNA; the 5S rRNA and some of its associated proteins might help stabilize positioning of ribosome-bound tRNAs. This Wigglesworthia glossinidia brevipalpis protein is Large ribosomal subunit protein uL5.